The chain runs to 94 residues: Cell division protein FtsB (94 aa).

The Cytoplasmic segment spans residues 1 to 3 (MRW). Residues 4-21 (LTVGLLAAIGLLQYPLWV) traverse the membrane as a helical segment. Topologically, residues 22–94 (GKGGWLKVWE…VQIPEKVPGK (73 aa)) are periplasmic. Positions 31–73 (EYDRQLQQQKEVTRKLEIRNAGLDAEVRDLKQGYDAIEERARF) form a coiled coil.

Belongs to the FtsB family. Part of a complex composed of FtsB, FtsL and FtsQ.

The protein resides in the cell inner membrane. Functionally, essential cell division protein. May link together the upstream cell division proteins, which are predominantly cytoplasmic, with the downstream cell division proteins, which are predominantly periplasmic. The sequence is that of Cell division protein FtsB from Dechloromonas aromatica (strain RCB).